We begin with the raw amino-acid sequence, 130 residues long: Small ribosomal subunit protein uS11 (130 aa).

It belongs to the universal ribosomal protein uS11 family. Part of the 30S ribosomal subunit. Interacts with proteins S7 and S18. Binds to IF-3.

In terms of biological role, located on the platform of the 30S subunit, it bridges several disparate RNA helices of the 16S rRNA. Forms part of the Shine-Dalgarno cleft in the 70S ribosome. The polypeptide is Small ribosomal subunit protein uS11 (Shewanella violacea (strain JCM 10179 / CIP 106290 / LMG 19151 / DSS12)).